A 316-amino-acid chain; its full sequence is Ribose-phosphate pyrophosphokinase (316 aa).

ATP-binding positions include 37-39 (DGE) and 96-97 (RQ). Positions 131 and 171 each coordinate Mg(2+). K195 is an active-site residue. D-ribose 5-phosphate-binding positions include R197, D221, and 225–229 (DTGGT).

Belongs to the ribose-phosphate pyrophosphokinase family. Class I subfamily. Homohexamer. Mg(2+) is required as a cofactor.

It is found in the cytoplasm. It carries out the reaction D-ribose 5-phosphate + ATP = 5-phospho-alpha-D-ribose 1-diphosphate + AMP + H(+). The protein operates within metabolic intermediate biosynthesis; 5-phospho-alpha-D-ribose 1-diphosphate biosynthesis; 5-phospho-alpha-D-ribose 1-diphosphate from D-ribose 5-phosphate (route I): step 1/1. Its function is as follows. Involved in the biosynthesis of the central metabolite phospho-alpha-D-ribosyl-1-pyrophosphate (PRPP) via the transfer of pyrophosphoryl group from ATP to 1-hydroxyl of ribose-5-phosphate (Rib-5-P). The polypeptide is Ribose-phosphate pyrophosphokinase (Haemophilus ducreyi (strain 35000HP / ATCC 700724)).